Consider the following 1132-residue polypeptide: Mediator of RNA polymerase II transcription subunit 5 (1132 aa).

Residues 998 to 1023 (KGDVDIKGEDLHEKNDSAEVRQETQP) are compositionally biased toward basic and acidic residues. Positions 998 to 1070 (KGDVDIKGED…RTNNVPMIKA (73 aa)) are disordered. Acidic residues predominate over residues 1047 to 1057 (YEEEEENEDND).

This sequence belongs to the Mediator complex subunit 5 family. In terms of assembly, component of the Mediator complex, which is composed of at least 21 subunits that form three structurally distinct submodules. The Mediator head module contains MED6, MED8, MED11, SRB4/MED17, SRB5/MED18, ROX3/MED19, SRB2/MED20 and SRB6/MED22, the middle module contains MED1, MED4, NUT1/MED5, MED7, CSE2/MED9, NUT2/MED10, SRB7/MED21 and SOH1/MED31, and the tail module contains MED2, PGD1/MED3, RGR1/MED14, GAL11/MED15 and SIN4/MED16. The head and the middle modules interact directly with RNA polymerase II, whereas the elongated tail module interacts with gene-specific regulatory proteins.

Its subcellular location is the nucleus. Its function is as follows. Component of the Mediator complex, a coactivator involved in the regulated transcription of nearly all RNA polymerase II-dependent genes. Mediator functions as a bridge to convey information from gene-specific regulatory proteins to the basal RNA polymerase II transcription machinery. The Mediator complex, having a compact conformation in its free form, is recruited to promoters by direct interactions with regulatory proteins and serves for the assembly of a functional preinitiation complex with RNA polymerase II and the general transcription factors. The Mediator complex unfolds to an extended conformation and partially surrounds RNA polymerase II, specifically interacting with the unphosphorylated form of the C-terminal domain (CTD) of RNA polymerase II. The Mediator complex dissociates from the RNA polymerase II holoenzyme and stays at the promoter when transcriptional elongation begins. This Saccharomyces cerevisiae (strain ATCC 204508 / S288c) (Baker's yeast) protein is Mediator of RNA polymerase II transcription subunit 5 (NUT1).